The following is a 286-amino-acid chain: Glucose import system permease protein GlcT (286 aa).

The next 6 membrane-spanning stretches (helical) occupy residues 6–26, 71–91, 103–123, 154–174, 199–219, and 260–280; these read TIIL…LVIW, VILV…LYFL, IVIY…LWLF, LVLV…LAGF, ILIP…FLFS, and VATM…LTVI. The 213-residue stretch at 63 to 275 folds into the ABC transmembrane type-1 domain; the sequence is LLHSIELSVI…LIATIIIIPY (213 aa).

It belongs to the binding-protein-dependent transport system permease family. In terms of assembly, the complex is composed of two ATP-binding proteins (GlcV), two transmembrane proteins (GlcT and GlcU) and a solute-binding protein (GlcS).

The protein resides in the cell membrane. In terms of biological role, part of the ABC transporter complex GlcSTUV involved in glucose uptake. Responsible for the translocation of the substrate across the membrane. This is Glucose import system permease protein GlcT from Saccharolobus solfataricus (strain ATCC 35092 / DSM 1617 / JCM 11322 / P2) (Sulfolobus solfataricus).